The chain runs to 307 residues: Ribosomal RNA small subunit methyltransferase H (307 aa).

S-adenosyl-L-methionine is bound by residues 33 to 35 (GGY), D51, F82, D96, and Q103.

It belongs to the methyltransferase superfamily. RsmH family.

Its subcellular location is the cytoplasm. It catalyses the reaction cytidine(1402) in 16S rRNA + S-adenosyl-L-methionine = N(4)-methylcytidine(1402) in 16S rRNA + S-adenosyl-L-homocysteine + H(+). Functionally, specifically methylates the N4 position of cytidine in position 1402 (C1402) of 16S rRNA. The protein is Ribosomal RNA small subunit methyltransferase H of Rickettsia peacockii (strain Rustic).